We begin with the raw amino-acid sequence, 237 residues long: Uracil-DNA glycosylase (237 aa).

Asp-77 acts as the Proton acceptor in catalysis.

This sequence belongs to the uracil-DNA glycosylase (UDG) superfamily. UNG family.

Its subcellular location is the cytoplasm. The enzyme catalyses Hydrolyzes single-stranded DNA or mismatched double-stranded DNA and polynucleotides, releasing free uracil.. Its function is as follows. Excises uracil residues from the DNA which can arise as a result of misincorporation of dUMP residues by DNA polymerase or due to deamination of cytosine. The sequence is that of Uracil-DNA glycosylase from Acinetobacter baumannii (strain SDF).